We begin with the raw amino-acid sequence, 426 residues long: UPF0597 protein CLI_1810 (426 aa).

Belongs to the UPF0597 family.

This Clostridium botulinum (strain Langeland / NCTC 10281 / Type F) protein is UPF0597 protein CLI_1810.